A 407-amino-acid chain; its full sequence is Putative nickel insertion protein (407 aa).

Belongs to the LarC family.

This chain is Putative nickel insertion protein, found in Gloeothece citriformis (strain PCC 7424) (Cyanothece sp. (strain PCC 7424)).